We begin with the raw amino-acid sequence, 736 residues long: Microtubule-associated protein mu-2 (736 aa).

The protein belongs to the orthoreovirus mu-2 protein family. In terms of assembly, interacts with protein mu-NS; in viral inclusions. Interacts with polymerase lambda-3; this interaction stimulates the ATPase activity of mu-2. The cofactor is a divalent metal cation.

It localises to the virion. It is found in the host cytoplasm. Its subcellular location is the host cytoskeleton. In terms of biological role, minor inner capsid (core) component. Displays NTPase and RNA 5'-triphosphatase (RTPase) activities. ATP is the preferred substrate for hydrolysis. May function as a cofactor of polymerase lambda-3. Associates with microtubules and plays a role in the formation, structural organization and morphology of viral inclusions, where the assembly of cores and the replication of viral RNA occur. Together with mu-NS, recruits the other core proteins to these inclusions. This chain is Microtubule-associated protein mu-2 (M1), found in Mammalia (T1L).